The following is a 223-amino-acid chain: DNA-directed RNA polymerase III subunit RPC7 (223 aa).

Residues 110–223 (MMPRNKCKKA…SDDNMDEATY (114 aa)) form a disordered region. Positions 114–125 (NKCKKAGPKPKK) are enriched in basic residues. T133 is subject to Phosphothreonine. Residues 140–155 (DVLKKMEELEKRGDGE) show a composition bias toward basic and acidic residues. Phosphoserine is present on S157. Residues 164 to 173 (KEGSKEKSKE) show a composition bias toward basic and acidic residues. Composition is skewed to acidic residues over residues 174–198 (GDDD…EEND) and 205–223 (EDGD…EATY).

It belongs to the eukaryotic RPC7 RNA polymerase subunit family. Component of the RNA polymerase III complex consisting of 17 subunits: a ten-subunit horseshoe-shaped catalytic core composed of POLR3A/RPC1, POLR3B/RPC2, POLR1C/RPAC1, POLR1D/RPAC2, POLR3K/RPC10, POLR2E/RPABC1, POLR2F/RPABC2, POLR2H/RPABC3, POLR2K/RPABC4 and POLR2L/RPABC5; a mobile stalk composed of two subunits POLR3H/RPC8 and CRCP/RPC9, protruding from the core and functioning primarily in transcription initiation; and additional subunits homologous to general transcription factors of the RNA polymerase II machinery, POLR3C/RPC3-POLR3F/RPC6-POLR3G/RPC7 heterotrimer required for transcription initiation and POLR3D/RPC4-POLR3E/RPC5 heterodimer involved in both transcription initiation and termination. Directly interacts with POLR3C/RPC62. Also found in a trimeric complex with POLR3C/RPC3 and POLR3GL. In terms of tissue distribution, barely detectable in differentiated tissues. Expressed in embryonic stem cells and in other dividing cells, such as some tumor cell lines.

Its subcellular location is the nucleus. The protein resides in the cytoplasm. In terms of biological role, DNA-dependent RNA polymerase catalyzes the transcription of DNA into RNA using the four ribonucleoside triphosphates as substrates. Specific peripheric component of RNA polymerase III (Pol III) which synthesizes small non-coding RNAs including 5S rRNA, snRNAs, tRNAs and miRNAs from at least 500 distinct genomic loci. Acts as a long tether that bridges POLR3C/RPC3-POLR3F/RPC6-POLR3G/RPC7 heterotrimer and the mobile stalk of Pol III, coordinating the dynamics of Pol III stalk and clamp modules during the transition from apo to elongation state. Pol III exists as two alternative complexes defined by the mutually exclusive incorporation of subunit POLR3G/RPC7alpha or POLR3GL/RPC7beta. POLR3G/RPC7alpha modulates Pol III transcriptome by specifically enhancing the transcription of snaR-A non-coding RNAs. At resting state, occupies the active site of apo Pol III and keeps Pol III in an autoinhibitory mode, preventing non-specific transcription. Pol III plays a key role in sensing and limiting infection by intracellular bacteria and DNA viruses. Acts as a nuclear and cytosolic DNA sensor involved in innate immune response. Can sense non-self dsDNA that serves as template for transcription into dsRNA. The non-self RNA polymerase III transcripts, such as Epstein-Barr virus-encoded RNAs (EBERs), induce type I interferon and NF-kappa-B through the RIG-I pathway. In Homo sapiens (Human), this protein is DNA-directed RNA polymerase III subunit RPC7.